The chain runs to 118 residues: Large ribosomal subunit protein bL20 (118 aa).

It belongs to the bacterial ribosomal protein bL20 family.

Functionally, binds directly to 23S ribosomal RNA and is necessary for the in vitro assembly process of the 50S ribosomal subunit. It is not involved in the protein synthesizing functions of that subunit. The sequence is that of Large ribosomal subunit protein bL20 (rplT) from Aquifex aeolicus (strain VF5).